The following is a 1213-amino-acid chain: A disintegrin and metalloproteinase with thrombospondin motifs 19 (1213 aa).

The first 27 residues, 1–27, serve as a signal peptide directing secretion; sequence MGKNREMRLTHICCCCLLYQLGFLSNG. Residues 28 to 322 constitute a propeptide that is removed on maturation; that stretch reads IVSELQFAPD…KIAESGRGKR (295 aa). Disordered stretches follow at residues 49 to 161 and 192 to 215; these read WRRE…PPPA and FLAP…AASA. The segment covering 52–71 has biased composition (gly residues); that stretch reads EPVDPAGGSGGSADPGWVRG. Residues 110–119 show a composition bias toward acidic residues; the sequence is RPPPPSEGEE. The segment covering 120 to 139 has biased composition (low complexity); it reads DEELESQELPRGSSGAAALS. A compositionally biased stretch (pro residues) spans 140–155; the sequence is PGAPASWQPPPPPQPP. An N-linked (GlcNAc...) asparagine glycan is attached at asparagine 266. The Cysteine switch signature appears at 298 to 305; that stretch reads HYCGIISD. Cysteine 300 contacts Zn(2+). In terms of domain architecture, Peptidase M12B spans 331–551; that stretch reads YNIETVVVAD…KASNCLLQTN (221 aa). Intrachain disulfides connect cysteine 407–cysteine 472, cysteine 447–cysteine 454, cysteine 466–cysteine 546, cysteine 505–cysteine 530, cysteine 575–cysteine 599, cysteine 586–cysteine 607, cysteine 594–cysteine 626, cysteine 620–cysteine 631, cysteine 651–cysteine 686, cysteine 655–cysteine 691, and cysteine 666–cysteine 676. Histidine 488 is a binding site for Zn(2+). The active site involves glutamate 489. Histidine 492 and histidine 498 together coordinate Zn(2+). In terms of domain architecture, Disintegrin spans 552–639; sequence PQSVNSVMVP…ECTSRTSAPE (88 aa). The TSP type-1 1 domain maps to 640-692; the sequence is HLAGEWSLWSPCSRTCSAGISSRERKCPGLDSEARDCNGPRKQYRICENPPCP. The segment at 797–920 is spacer; it reads IIKGDFNHTR…PENQSSKAPE (124 aa). 4 N-linked (GlcNAc...) asparagine glycosylation sites follow: asparagine 803, asparagine 913, asparagine 955, and asparagine 1015. TSP type-1 domains follow at residues 921-981, 982-1043, 1045-1089, and 1093-1150; these read PLFM…NEQP, CQTR…QDCM, VWEA…EDCE, and KCYV…QPCN. 3 cysteine pairs are disulfide-bonded: cysteine 994/cysteine 1037, cysteine 998/cysteine 1042, and cysteine 1009/cysteine 1026. One can recognise a PLAC domain in the interval 1166–1205; it reads LTFKCLGDQWPVYCRVIREKNLCQDMRWYQRCCETCRDFY.

Zn(2+) is required as a cofactor. The precursor is cleaved by a furin endopeptidase. In terms of processing, glycosylated. Can be O-fucosylated by POFUT2 on a serine or a threonine residue found within the consensus sequence C1-X(2)-(S/T)-C2-G of the TSP type-1 repeat domains where C1 and C2 are the first and second cysteine residue of the repeat, respectively. Fucosylated repeats can then be further glycosylated by the addition of a beta-1,3-glucose residue by the glucosyltransferase, B3GALTL. Fucosylation mediates the efficient secretion of ADAMTS family members. Can also be C-glycosylated with one or two mannose molecules on tryptophan residues within the consensus sequence W-X-X-W of the TPRs, and N-glycosylated. These other glycosylations can also facilitate secretion. In terms of tissue distribution, expressed in fetal lung, but not in any adult tissues examined. Expression was detected in an osteosarcoma cDNA library.

The protein localises to the secreted. It is found in the extracellular space. It localises to the extracellular matrix. This Homo sapiens (Human) protein is A disintegrin and metalloproteinase with thrombospondin motifs 19 (ADAMTS19).